A 279-amino-acid polypeptide reads, in one-letter code: GATA transcription factor 15 (279 aa).

The disordered stretch occupies residues alanine 52–alanine 94. Low complexity predominate over residues threonine 58–valine 74. Residues cysteine 154 to cysteine 179 form a GATA-type zinc finger.

This sequence belongs to the type IV zinc-finger family. Class B subfamily. Highly expressed in inflorescences. Expressed in vascular bundles of root stele within the elongation zones, of elongating upper internodes and of the junctions of leaf blades and sheaths.

Probable transcription factor that regulates organogenesis during transition from the vegetative to the reproductive phase. Regulates the expression of CYP78A11/PLA1, HD3A and MADS1 during reproductive development in rice. May act upstream of CYP78A11/PLA1 during panicle development. Acts independently of the photoperiodic and gibberellin signaling pathways. In Oryza sativa subsp. japonica (Rice), this protein is GATA transcription factor 15.